The chain runs to 133 residues: p53 and DNA damage-regulated protein 1 (133 aa).

The protein belongs to the prefoldin subunit beta family. Component of the PAQosome complex which is responsible for the biogenesis of several protein complexes and which consists of R2TP complex members RUVBL1, RUVBL2, RPAP3 and PIH1D1, URI complex members PFDN2, PFDN6, PDRG1, UXT and URI1 as well as ASDURF, POLR2E and DNAAF10/WDR92.

The protein resides in the cytoplasm. Its function is as follows. May play a role in chaperone-mediated protein folding. This is p53 and DNA damage-regulated protein 1 (Pdrg1) from Rattus norvegicus (Rat).